The sequence spans 531 residues: Dihydropyrimidinase (531 aa).

Zn(2+) contacts are provided by His-103, His-105, and Lys-193. Residue Lys-193 is modified to N6-carboxylysine. Tyr-198 serves as a coordination point for substrate. Zn(2+) is bound by residues His-226 and His-282. Ser-332 contacts substrate. Position 359 (Asp-359) interacts with Zn(2+). Residue Asn-380 coordinates substrate.

It belongs to the metallo-dependent hydrolases superfamily. Hydantoinase/dihydropyrimidinase family. As to quaternary structure, homotetramer. It depends on Zn(2+) as a cofactor. In terms of processing, carboxylation allows a single lysine to coordinate two zinc ions.

The protein localises to the endoplasmic reticulum. The enzyme catalyses 5,6-dihydrouracil + H2O = 3-(carbamoylamino)propanoate + H(+). The protein operates within amino-acid biosynthesis; beta-alanine biosynthesis. Functionally, catalyzes the second step of the reductive pyrimidine degradation, the reversible hydrolytic ring opening of dihydropyrimidines. Can catalyze the ring opening of 5,6-dihydrouracil to N-carbamoyl-alanine and of 5,6-dihydrothymine to N-carbamoyl-amino isobutyrate. Involved in the recycling of nitrogen from nucleobases to general nitrogen metabolism. The protein is Dihydropyrimidinase of Arabidopsis thaliana (Mouse-ear cress).